The following is a 916-amino-acid chain: Isoleucine--tRNA ligase (916 aa).

The short motif at 57–67 (PYANGNLHMGH) is the 'HIGH' region element. E554 provides a ligand contact to L-isoleucyl-5'-AMP. Positions 595–599 (KMSKS) match the 'KMSKS' region motif. K598 lines the ATP pocket. 4 residues coordinate Zn(2+): C885, C888, C905, and C908.

This sequence belongs to the class-I aminoacyl-tRNA synthetase family. IleS type 1 subfamily. As to quaternary structure, monomer. The cofactor is Zn(2+).

The protein localises to the cytoplasm. It carries out the reaction tRNA(Ile) + L-isoleucine + ATP = L-isoleucyl-tRNA(Ile) + AMP + diphosphate. Functionally, catalyzes the attachment of isoleucine to tRNA(Ile). As IleRS can inadvertently accommodate and process structurally similar amino acids such as valine, to avoid such errors it has two additional distinct tRNA(Ile)-dependent editing activities. One activity is designated as 'pretransfer' editing and involves the hydrolysis of activated Val-AMP. The other activity is designated 'posttransfer' editing and involves deacylation of mischarged Val-tRNA(Ile). This chain is Isoleucine--tRNA ligase (ileS), found in Staphylococcus epidermidis (strain ATCC 35984 / DSM 28319 / BCRC 17069 / CCUG 31568 / BM 3577 / RP62A).